The sequence spans 192 residues: uncharacterized protein (192 aa).

The next 6 membrane-spanning stretches (helical) occupy residues valine 5–leucine 22, phenylalanine 42–tyrosine 61, leucine 66–leucine 88, tryptophan 101–leucine 118, leucine 122–leucine 139, and alanine 159–phenylalanine 181.

It is found in the cell membrane. This is an uncharacterized protein from Treponema pallidum (strain Nichols).